The primary structure comprises 837 residues: Cap-specific mRNA (nucleoside-2'-O-)-methyltransferase 1 (837 aa).

Positions 1-66 (MKRRTDPECT…EGKQPCSDDF (66 aa)) are disordered. Positions 2 to 18 (KRRTDPECTAPLKKQKR) match the Bipartite nuclear localization signal motif. A phosphoserine mark is found at S27, S30, and S52. Residues 56–66 (TEGKQPCSDDF) are compositionally biased toward basic and acidic residues. The G-patch domain maps to 86-132 (YNSVSQRLMAKMGFREGEGLGKYSQGRKDIVETSNQKGRRGLGLTLQ). Position 90 is a phosphoserine (S90). K107 carries the N6-acetyllysine modification. Residues 202–206 (KSVFD) and R217 each bind substrate. The RrmJ-type SAM-dependent 2'-O-MTase domain occupies 230–449 (FFLNRAAMKM…ERYVVCKGLK (220 aa)). N233 contacts S-adenosyl-L-methionine. K238 is an active-site residue. S-adenosyl-L-methionine contacts are provided by residues 276–282 (CAGPGGF) and 334–335 (DI). The active site involves D363. Residue 373–375 (NLQ) coordinates substrate. Catalysis depends on K403, which acts as the Proton acceptor. Substrate is bound at residue N438. Residues 726 to 834 (SGGTPKLSYT…VLSFIQSHNP (109 aa)) form an interaction with POLR2A region. A WW domain is found at 751 to 785 (RTVNEPWTMGFSKSNNRKFFYNKKTQKSVYALPTE).

As to quaternary structure, interacts with POLR2A (via C-terminus).

The protein localises to the nucleus. It carries out the reaction a 5'-end (N(7)-methyl 5'-triphosphoguanosine)-ribonucleoside in mRNA + S-adenosyl-L-methionine = a 5'-end (N(7)-methyl 5'-triphosphoguanosine)-(2'-O-methyl-ribonucleoside) in mRNA + S-adenosyl-L-homocysteine + H(+). Functionally, S-adenosyl-L-methionine-dependent methyltransferase that mediates mRNA cap1 2'-O-ribose methylation to the 5'-cap structure of mRNAs. Methylates the ribose of the first nucleotide of a m(7)GpppG-capped mRNA and small nuclear RNA (snRNA) to produce m(7)GpppRm (cap1). Displays a preference for cap0 transcripts. Cap1 modification is linked to higher levels of translation. May be involved in the interferon response pathway. In Mus musculus (Mouse), this protein is Cap-specific mRNA (nucleoside-2'-O-)-methyltransferase 1 (Cmtr1).